We begin with the raw amino-acid sequence, 249 residues long: Myelin protein P0 (249 aa).

The first 29 residues, 1–29 (MALGAIGDGRLLLLLVGLLSASGPSPTLA), serve as a signal peptide directing secretion. The region spanning 30–143 (IHVYTPREVY…DIVGKSSQVT (114 aa)) is the Ig-like V-type domain. Over 30-153 (IHVYTPREVY…LYVLEKVPTR (124 aa)) the chain is Extracellular. An intrachain disulfide couples C50 to C127. N-linked (GlcNAc...) asparagine glycosylation occurs at N122. The chain crosses the membrane as a helical span at residues 154–179 (YGVVLGSIIGGVLLLVALLVAVVYLV). The Cytoplasmic segment spans residues 180–249 (RFCWLRRQAV…APGEARKDKK (70 aa)). Residues 227-249 (RSAKAAAEKKSKGAPGEARKDKK) are disordered.

This sequence belongs to the myelin P0 protein family. In terms of tissue distribution, found only in peripheral nervous system Schwann cells.

It localises to the cell membrane. In terms of biological role, is an adhesion molecule necessary for normal myelination in the peripheral nervous system. It mediates adhesion between adjacent myelin wraps and ultimately drives myelin compaction. The sequence is that of Myelin protein P0 (MPZ) from Gallus gallus (Chicken).